We begin with the raw amino-acid sequence, 261 residues long: Putative phosphite transport system permease protein HtxE (261 aa).

An ABC transmembrane type-1 domain is found at 47 to 253; it reads EATTETVEVL…VFVFVLDQLQ (207 aa). Transmembrane regions (helical) follow at residues 122–142, 203–220, and 229–249; these read LIVA…GVLA, RNLR…GGIG, and MFQY…VFVL.

This sequence belongs to the binding-protein-dependent transport system permease family.

The protein localises to the cell inner membrane. In terms of biological role, probably forms part of a binding-protein-dependent hypophosphite transporter. The sequence is that of Putative phosphite transport system permease protein HtxE (htxE) from Stutzerimonas stutzeri (Pseudomonas stutzeri).